Consider the following 347-residue polypeptide: Probable zinc transporter 8 (347 aa).

A signal peptide spans 1–27 (MATTTQHMNQIFLVLLLISFAISPAIS). The Extracellular portion of the chain corresponds to 28–51 (TVPKECETDSTDSCIDKTKALPLK). Residues 52–72 (IVAIVAILVTSMIGVAAPLFS) traverse the membrane as a helical segment. The Cytoplasmic portion of the chain corresponds to 73–83 (RYVTFLHPDGK). Residues 84 to 104 (IFMIIKCFASGIILGTGFMHV) form a helical membrane-spanning segment. At 105 to 124 (LPDSFEMLSSPCLEDNPWHK) the chain is on the extracellular side. A helical membrane pass occupies residues 125–145 (FPFTGFVAMLSGLVTLAIDSI). Over 146–192 (ATSLYTKKAVADDSEERTTPMIIQIDHLPLTTKERSSTCSKQLLRYR) the chain is Cytoplasmic. Residues 193-213 (VIATVLELGIIVHSVVIGLSL) traverse the membrane as a helical segment. The Extracellular segment spans residues 214-224 (GATNDTCTIKG). A helical transmembrane segment spans residues 225 to 245 (LIAALCFHQMFEGMGLGGCIL). Residues 246-254 (QAEYTNVKK) are Cytoplasmic-facing. Residues 255-275 (FVMAFFFAVTTPSGIALGIAL) form a helical membrane-spanning segment. At 276-286 (SSVYKDNSPTA) the chain is on the extracellular side. The chain crosses the membrane as a helical span at residues 287–307 (LITVGLLNACSAGLLIYMALV). Residues 308 to 326 (DLLAAEFMGSMLQRSVKLQ) lie on the Cytoplasmic side of the membrane. Residues 327 to 347 (LNCFGAALLGCGGMSVLAKWA) form a helical membrane-spanning segment.

Belongs to the ZIP transporter (TC 2.A.5) family.

It is found in the cell membrane. Probably mediates zinc uptake from the rhizosphere. In Arabidopsis thaliana (Mouse-ear cress), this protein is Probable zinc transporter 8 (ZIP8).